The chain runs to 133 residues: Ribosome-binding factor A (133 aa).

Belongs to the RbfA family. In terms of assembly, monomer. Binds 30S ribosomal subunits, but not 50S ribosomal subunits or 70S ribosomes.

Its subcellular location is the cytoplasm. In terms of biological role, one of several proteins that assist in the late maturation steps of the functional core of the 30S ribosomal subunit. Associates with free 30S ribosomal subunits (but not with 30S subunits that are part of 70S ribosomes or polysomes). Required for efficient processing of 16S rRNA. May interact with the 5'-terminal helix region of 16S rRNA. This chain is Ribosome-binding factor A, found in Chlamydia muridarum (strain MoPn / Nigg).